A 176-amino-acid polypeptide reads, in one-letter code: Inner membrane-spanning protein YciB (176 aa).

5 helical membrane passes run 3–23 (FLFD…WGIF), 49–69 (TMLW…LVLH), 72–92 (KFIQ…LVAA), 118–138 (KLNL…LYVV), and 149–169 (FKLF…SLWL).

It belongs to the YciB family.

The protein resides in the cell inner membrane. Plays a role in cell envelope biogenesis, maintenance of cell envelope integrity and membrane homeostasis. The protein is Inner membrane-spanning protein YciB of Burkholderia thailandensis (strain ATCC 700388 / DSM 13276 / CCUG 48851 / CIP 106301 / E264).